The following is a 483-amino-acid chain: Serine hydroxymethyltransferase, cytosolic (483 aa).

An N6-(pyridoxal phosphate)lysine modification is found at Lys-257.

Belongs to the SHMT family. As to quaternary structure, homotetramer. Identified in complex with ABRAXAS2 and the other subunits of the BRISC complex, at least composed of ABRAXAS2, BRCC3/BRCC36, BABAM2 and BABAM1/NBA1. The cofactor is pyridoxal 5'-phosphate.

The protein resides in the cytoplasm. The catalysed reaction is (6R)-5,10-methylene-5,6,7,8-tetrahydrofolate + glycine + H2O = (6S)-5,6,7,8-tetrahydrofolate + L-serine. It participates in one-carbon metabolism; tetrahydrofolate interconversion. Functionally, interconversion of serine and glycine. The polypeptide is Serine hydroxymethyltransferase, cytosolic (SHMT1) (Pongo abelii (Sumatran orangutan)).